The following is a 743-amino-acid chain: Threonine synthase-like 1 (743 aa).

K281 bears the N6-acetyllysine mark. At K351 the chain carries N6-(pyridoxal phosphate)lysine.

Belongs to the threonine synthase family. It depends on pyridoxal 5'-phosphate as a cofactor.

The sequence is that of Threonine synthase-like 1 (THNSL1) from Homo sapiens (Human).